The sequence spans 284 residues: 2-dehydro-3-deoxyphosphooctonate aldolase (284 aa).

This sequence belongs to the KdsA family.

The protein localises to the cytoplasm. The catalysed reaction is D-arabinose 5-phosphate + phosphoenolpyruvate + H2O = 3-deoxy-alpha-D-manno-2-octulosonate-8-phosphate + phosphate. It functions in the pathway carbohydrate biosynthesis; 3-deoxy-D-manno-octulosonate biosynthesis; 3-deoxy-D-manno-octulosonate from D-ribulose 5-phosphate: step 2/3. It participates in bacterial outer membrane biogenesis; lipopolysaccharide biosynthesis. The protein is 2-dehydro-3-deoxyphosphooctonate aldolase of Escherichia coli O6:K15:H31 (strain 536 / UPEC).